The primary structure comprises 384 residues: Spermidine/putrescine import ATP-binding protein PotA (384 aa).

Positions isoleucine 6 to isoleucine 238 constitute an ABC transporter domain. Glycine 40–serine 47 contributes to the ATP binding site.

Belongs to the ABC transporter superfamily. Spermidine/putrescine importer (TC 3.A.1.11.1) family. As to quaternary structure, the complex is composed of two ATP-binding proteins (PotA), two transmembrane proteins (PotB and PotC) and a solute-binding protein (PotD).

It localises to the cell membrane. It carries out the reaction ATP + H2O + polyamine-[polyamine-binding protein]Side 1 = ADP + phosphate + polyamineSide 2 + [polyamine-binding protein]Side 1.. Part of the ABC transporter complex PotABCD involved in spermidine/putrescine import. Responsible for energy coupling to the transport system. The polypeptide is Spermidine/putrescine import ATP-binding protein PotA (Streptococcus agalactiae serotype Ia (strain ATCC 27591 / A909 / CDC SS700)).